A 190-amino-acid chain; its full sequence is Elongation factor P (190 aa).

N6-(3,6-diaminohexanoyl)-5-hydroxylysine is present on Lys-34.

This sequence belongs to the elongation factor P family. Post-translationally, may be beta-lysylated on the epsilon-amino group of Lys-34 by the combined action of EpmA and EpmB, and then hydroxylated on the C5 position of the same residue by EpmC (if this protein is present). Lysylation is critical for the stimulatory effect of EF-P on peptide-bond formation. The lysylation moiety may extend toward the peptidyltransferase center and stabilize the terminal 3-CCA end of the tRNA. Hydroxylation of the C5 position on Lys-34 may allow additional potential stabilizing hydrogen-bond interactions with the P-tRNA.

It localises to the cytoplasm. The protein operates within protein biosynthesis; polypeptide chain elongation. Involved in peptide bond synthesis. Alleviates ribosome stalling that occurs when 3 or more consecutive Pro residues or the sequence PPG is present in a protein, possibly by augmenting the peptidyl transferase activity of the ribosome. Modification of Lys-34 is required for alleviation. The protein is Elongation factor P of Psychrobacter cryohalolentis (strain ATCC BAA-1226 / DSM 17306 / VKM B-2378 / K5).